We begin with the raw amino-acid sequence, 37 residues long: Potassium channel toxin alpha-KTx 11.2 (37 aa).

Cystine bridges form between C8–C27, C13–C33, and C17–C35.

The protein belongs to the short scorpion toxin superfamily. Potassium channel inhibitor family. Alpha-KTx 11 subfamily. As to expression, expressed by the venom gland.

The protein localises to the secreted. Its function is as follows. Binds and inhibits voltage-sensitive potassium channels. Inhibits the vertebrate potassium channel Kv1.1/KCNA1 with low affinity. In Parabuthus villosus (Black hairy thick-tailed scorpion), this protein is Potassium channel toxin alpha-KTx 11.2.